The sequence spans 300 residues: MDTTLSHTPGSRLSQYLALTKPRVTQLAVFCAVIGMFLATPGMVPWKVLLGGTIGIGLLAGSAFAINCLVEQKIDAMMRRTAWRPSARGEITTLQILAFSTVLGGLGAWTLYTFTNPLTMWLTIATFVGYAVIYTLLLKPMTPQNIVIGGASGAMPPALGWAAVTGAVPGDAWILVLIIFVWTPPHFWVLALYRRKDYENAGLPMLPVTHGEQFTRLHILLYTVILFAVTMMPFISGMSGAVYLTSAVLLGALFLAYAWKIYRDYSDALARRAFRYSIVYLSLLFAALLVDHYARPVIGM.

Helical transmembrane passes span Val24–Val44, Val48–Cys68, Leu94–Phe114, Leu118–Leu138, Ile146–Gly166, Ala172–Leu192, Leu217–Gly237, Ser239–Trp259, and Ile278–Ile298.

This sequence belongs to the UbiA prenyltransferase family. Protoheme IX farnesyltransferase subfamily.

It localises to the cell inner membrane. The enzyme catalyses heme b + (2E,6E)-farnesyl diphosphate + H2O = Fe(II)-heme o + diphosphate. The protein operates within porphyrin-containing compound metabolism; heme O biosynthesis; heme O from protoheme: step 1/1. Converts heme B (protoheme IX) to heme O by substitution of the vinyl group on carbon 2 of heme B porphyrin ring with a hydroxyethyl farnesyl side group. In Burkholderia pseudomallei (strain 1106a), this protein is Protoheme IX farnesyltransferase.